The sequence spans 3859 residues: Transformation/transcription domain-associated protein (3859 aa).

Alanine 2 is subject to N-acetylalanine. The segment covering 491-526 has biased composition (pro residues); the sequence is PAAPGPAPSPAPVPAPPPPPPPPPPATPVTPAPVPP. A disordered region spans residues 491–541; sequence PAAPGPAPSPAPVPAPPPPPPPPPPATPVTPAPVPPFEKQGEKDKEDKQTF. The span at 529–539 shows a compositional bias: basic and acidic residues; it reads KQGEKDKEDKQ. Residue serine 1628 is modified to Phosphoserine. Positions 2010-2388 are interaction with TP53; it reads SEVVIKWELQ…SPMAANQTPT (379 aa). The segment at 2023–2044 is disordered; it reads DQQPDSDMDPNSSGEGVNSVSS. A compositionally biased stretch (low complexity) spans 2033–2044; sequence NSSGEGVNSVSS. The Bipartite nuclear localization signal signature appears at 2047-2062; sequence KRGLSVDSAQEVKRFR. A phosphoserine mark is found at serine 2051 and serine 2077. Lysine 2543 is covalently cross-linked (Glycyl lysine isopeptide (Lys-Gly) (interchain with G-Cter in SUMO2)). Basic and acidic residues predominate over residues 2543–2554; that stretch reads KQEPRERENSES. A disordered region spans residues 2543 to 2578; it reads KQEPRERENSESKEEDVEIDIELAPGDQTSTPKTKE. An FAT domain is found at 2692–3275; that stretch reads VLKYLGKTHN…YFPIRTLYLT (584 aa). Lysine 3078 is subject to N6-acetyllysine. The PI3K/PI4K catalytic domain occupies 3500–3823; it reads MPRVEIVQKH…AVTAIMTRLH (324 aa). The G-loop stretch occupies residues 3506–3512; the sequence is VQKHNTA. The catalytic loop stretch occupies residues 3687–3695; it reads HLNRLNPEM. The interval 3707 to 3732 is activation loop; sequence VAYFRFDINDATGDLDANRPVPFRLT. Residues 3827 to 3859 enclose the FATC domain; sequence QFEGGESKVNTLVAAANSLDNLCRMDPAWHPWL.

Belongs to the PI3/PI4-kinase family. TRA1 subfamily. In terms of assembly, interacts with MYC, E2F1 and E2F4 transcription factors. Interacts directly with p53/TP53. Interacts with GCN5L2. Component of various HAT complexes. Component of the PCAF complex, at least composed of TADA2L/ADA2, SUPT3H, TADA3L/ADA3, TAF5L/PAF65-beta, TAF6L/PAF65-alpha, TAF10/TAFII30, TAF12/TAFII20, TAF9/TAFII31 and TRRAP. Component of the TFTC-HAT complex, at least composed of TAF5L, TAF6L, TADA3L, SUPT3H/SPT3, TAF2/TAFII150, TAF4/TAFII135, TAF5/TAFII100, GCN5L2/GCN5, TAF10 and TRRAP. Component of the NuA4 histone acetyltransferase complex which contains the catalytic subunit KAT5/TIP60 and the subunits EP400, TRRAP/PAF400, BRD8/SMAP, EPC1, DMAP1/DNMAP1, RUVBL1/TIP49, RUVBL2, ING3, actin, ACTL6A/BAF53A, MORF4L1/MRG15, MORF4L2/MRGX, MRGBP, YEATS4/GAS41, VPS72/YL1 and MEAF6. Component of the STAGA complex, at least composed of SUPT3H, GCN5L2, SUPT7L, TAF5L, TAF6L, TADA3L, TAD1L, TAF10, TAF12, TRRAP and TAF9. The STAGA core complex is associated with a subcomplex required for histone deubiquitination composed of ATXN7L3, ENY2 and USP22. Component of the BAF53 complex, at least composed of BAF53A, RUVBL1, SMARCA4/BRG1, and TRRAP, which preferentially acetylates histone H4 (and H2A) within nucleosomes. Interacts with NPAT. Interaction with TELO2 and TTI1. Component of a SWR1-like complex.

It localises to the nucleus. Adapter protein, which is found in various multiprotein chromatin complexes with histone acetyltransferase activity (HAT), which gives a specific tag for epigenetic transcription activation. Component of the NuA4 histone acetyltransferase complex which is responsible for acetylation of nucleosomal histones H4 and H2A. Plays a central role in MYC transcription activation, and also participates in cell transformation by MYC. Required for p53/TP53-, E2F1- and E2F4-mediated transcription activation. Also involved in transcription activation mediated by the adenovirus E1A, a viral oncoprotein that deregulates transcription of key genes. Probably acts by linking transcription factors such as E1A, MYC or E2F1 to HAT complexes such as STAGA thereby allowing transcription activation. Probably not required in the steps following histone acetylation in processes of transcription activation. May be required for the mitotic checkpoint and normal cell cycle progression. Component of a SWR1-like complex that specifically mediates the removal of histone H2A.Z/H2AZ1 from the nucleosome. May play a role in the formation and maintenance of the auditory system. This is Transformation/transcription domain-associated protein (TRRAP) from Homo sapiens (Human).